The primary structure comprises 473 residues: Ion-translocating oxidoreductase complex subunit C (473 aa).

2 4Fe-4S ferredoxin-type domains span residues 328 to 357 (KNES…QQLY) and 368 to 396 (TKKH…VKYF). Positions 337, 340, 343, 347, 376, 379, 382, and 386 each coordinate [4Fe-4S] cluster.

The protein belongs to the 4Fe4S bacterial-type ferredoxin family. RnfC subfamily. In terms of assembly, the complex is composed of six subunits: RnfA, RnfB, RnfC, RnfD, RnfE and RnfG. [4Fe-4S] cluster is required as a cofactor.

Its subcellular location is the cell inner membrane. Functionally, part of a membrane-bound complex that couples electron transfer with translocation of ions across the membrane. This Buchnera aphidicola subsp. Acyrthosiphon pisum (strain APS) (Acyrthosiphon pisum symbiotic bacterium) protein is Ion-translocating oxidoreductase complex subunit C.